We begin with the raw amino-acid sequence, 116 residues long: Methionine-R-sulfoxide reductase B1 (116 aa).

The MsrB domain occupies 1 to 106 (MSFCSFFGGE…FSSSLKFVPK (106 aa)). Zn(2+)-binding residues include Cys23, Cys26, Cys71, and Cys74. Residue Sec95 is the Nucleophile of the active site. Position 95 (Sec95) is a non-standard amino acid, selenocysteine.

The protein belongs to the MsrB Met sulfoxide reductase family. Zn(2+) is required as a cofactor. In terms of processing, truncated MSRB1/SEPX1 proteins produced by failed UGA/Sec decoding are ubiquitinated by the CRL2(FEM1C) E3 ubiquitin-protein ligase complex.

The protein localises to the cytoplasm. It localises to the nucleus. The protein resides in the cytoskeleton. It catalyses the reaction L-methionyl-[protein] + [thioredoxin]-disulfide + H2O = L-methionyl-(R)-S-oxide-[protein] + [thioredoxin]-dithiol. The enzyme catalyses [thioredoxin]-disulfide + L-methionine + H2O = L-methionine (R)-S-oxide + [thioredoxin]-dithiol. Functionally, methionine-sulfoxide reductase that specifically reduces methionine (R)-sulfoxide back to methionine. While in many cases, methionine oxidation is the result of random oxidation following oxidative stress, methionine oxidation is also a post-translational modification that takes place on specific residue. Acts as a regulator of actin assembly by reducing methionine (R)-sulfoxide mediated by MICALs (MICAL1, MICAL2 or MICAL3) on actin, thereby promoting filament repolymerization. Plays a role in innate immunity by reducing oxidized actin, leading to actin repolymerization in macrophages. The protein is Methionine-R-sulfoxide reductase B1 (MSRB1) of Pongo abelii (Sumatran orangutan).